The primary structure comprises 91 residues: DNA-binding protein HU (91 aa).

It belongs to the bacterial histone-like protein family.

Histone-like DNA-binding protein which is capable of wrapping DNA to stabilize it, and thus to prevent its denaturation under extreme environmental conditions. Also seems to act as a fortuitous virulence factor in delayed sequelae by binding to heparan sulfate-proteoglycans in the extracellular matrix of target organs and acting as a nidus for in situ immune complex formation. This Streptococcus gordonii protein is DNA-binding protein HU (hup).